Reading from the N-terminus, the 451-residue chain is 3-carboxy-cis,cis-muconate cycloisomerase (451 aa).

The protein belongs to the class-II fumarase/aspartase family.

The catalysed reaction is 2-(carboxymethyl)-5-oxo-2,5-dihydro-2-furoate = 3-carboxy-cis,cis-muconate + H(+). Functionally, catalyzes an anti cycloisomerization. The chain is 3-carboxy-cis,cis-muconate cycloisomerase (pcaB) from Bradyrhizobium diazoefficiens (strain JCM 10833 / BCRC 13528 / IAM 13628 / NBRC 14792 / USDA 110).